The sequence spans 355 residues: Glucose-6-phosphatase 2 (355 aa).

Residues 1 to 24 (MDFLHRSGVLIIHHLQEDYRTYYG) are Lumenal-facing. A helical membrane pass occupies residues 25-45 (FLNFMSNVGDPRNIFSIYFPL). At 46 to 56 (WFQLNQNVGTK) the chain is on the cytoplasmic side. The helical transmembrane segment at 57 to 77 (MIWVAVIGDWFNLIFKWILFG) threads the bilayer. The Lumenal portion of the chain corresponds to 78-115 (HRPYWWIQETEIYPNHSSPCLEQFPTTCETGPGSPSGH). Residue arginine 79 coordinates substrate. An N-linked (GlcNAc...) asparagine glycan is attached at asparagine 92. The Proton donor role is filled by histidine 115. A helical transmembrane segment spans residues 116-136 (AMGSSCVWYVMVTAALSYTIS). Topologically, residues 137–146 (RMEESSVTLH) are cytoplasmic. Residues 147–167 (RLTWSFLWSVFWLIQISVCIS) traverse the membrane as a helical segment. Position 168 (arginine 168) is a topological domain, lumenal. Residue arginine 168 participates in substrate binding. A helical membrane pass occupies residues 169-189 (VFIATHFPHQVILGVIGGMLV). Catalysis depends on histidine 174, which acts as the Nucleophile. Over 190–211 (AEAFEHTPGVHMASLSVYLKTN) the chain is Cytoplasmic. A helical transmembrane segment spans residues 212-232 (VFLFLFALGFYLLLRLFGIDL). Residues 233 to 252 (LWSVPIAKKWCANPDWIHID) lie on the Lumenal side of the membrane. Residues 253–273 (STPFAGLVRNLGVLFGLGFAI) form a helical membrane-spanning segment. Residues 274–290 (NSEMFLRSCQGENGTKP) lie on the Cytoplasmic side of the membrane. A helical transmembrane segment spans residues 291 to 307 (SFRLLCALTSLTTMQLY). The Lumenal portion of the chain corresponds to 308-318 (RFIKIPTHAEP). Residues 319–339 (LFYLLSFCKSASIPLMVVALI) form a helical membrane-spanning segment. At 340-355 (PYCVHMLMRPGDKKTK) the chain is on the cytoplasmic side. The Prevents secretion from ER motif lies at 352 to 355 (KKTK).

The protein belongs to the glucose-6-phosphatase family. In terms of processing, N-glycosylated; the non-glycosylated form is more unstable and is degraded through the proteasome. Specifically expressed in pancreatic islet cells, in particular those of beta-cell origin. Not detected in testis, kidney, muscle, liver, lung, spleen, brain, pituitary, gastric fundus or heart.

It localises to the endoplasmic reticulum membrane. The catalysed reaction is D-glucose 6-phosphate + H2O = D-glucose + phosphate. The protein operates within carbohydrate biosynthesis; gluconeogenesis. May hydrolyze glucose-6-phosphate to glucose in the endoplasmic reticulum. May be responsible for glucose production through glycogenolysis and gluconeogenesis. In Mus musculus (Mouse), this protein is Glucose-6-phosphatase 2 (G6pc2).